Reading from the N-terminus, the 202-residue chain is Glycerol-3-phosphate acyltransferase (202 aa).

The next 5 helical transmembrane spans lie at L6–V26, S56–F76, S82–F102, A118–I138, and Y141–D161.

The protein belongs to the PlsY family. Probably interacts with PlsX.

The protein localises to the cell inner membrane. It catalyses the reaction an acyl phosphate + sn-glycerol 3-phosphate = a 1-acyl-sn-glycero-3-phosphate + phosphate. It functions in the pathway lipid metabolism; phospholipid metabolism. In terms of biological role, catalyzes the transfer of an acyl group from acyl-phosphate (acyl-PO(4)) to glycerol-3-phosphate (G3P) to form lysophosphatidic acid (LPA). This enzyme utilizes acyl-phosphate as fatty acyl donor, but not acyl-CoA or acyl-ACP. The sequence is that of Glycerol-3-phosphate acyltransferase from Shewanella woodyi (strain ATCC 51908 / MS32).